Reading from the N-terminus, the 141-residue chain is Large ribosomal subunit protein uL11 (141 aa).

The protein belongs to the universal ribosomal protein uL11 family. In terms of assembly, part of the ribosomal stalk of the 50S ribosomal subunit. Interacts with L10 and the large rRNA to form the base of the stalk. L10 forms an elongated spine to which L12 dimers bind in a sequential fashion forming a multimeric L10(L12)X complex. In terms of processing, one or more lysine residues are methylated.

Its function is as follows. Forms part of the ribosomal stalk which helps the ribosome interact with GTP-bound translation factors. The protein is Large ribosomal subunit protein uL11 of Chloroflexus aurantiacus (strain ATCC 29366 / DSM 635 / J-10-fl).